The sequence spans 217 residues: Peptide deformylase 1 (217 aa).

Fe cation-binding residues include Cys129 and His171. Glu172 is an active-site residue. Residue His175 participates in Fe cation binding.

It belongs to the polypeptide deformylase family. It depends on Fe(2+) as a cofactor.

The enzyme catalyses N-terminal N-formyl-L-methionyl-[peptide] + H2O = N-terminal L-methionyl-[peptide] + formate. In terms of biological role, removes the formyl group from the N-terminal Met of newly synthesized proteins. Requires at least a dipeptide for an efficient rate of reaction. N-terminal L-methionine is a prerequisite for activity but the enzyme has broad specificity at other positions. The chain is Peptide deformylase 1 from Bifidobacterium longum (strain NCC 2705).